The sequence spans 471 residues: Apyrase 1 (471 aa).

Topologically, residues 1–21 (MTAKRAIGRHESLADKVHRHR) are cytoplasmic. Residues 22-42 (GLLLVISIPIVLIALVLLLMP) traverse the membrane as a helical; Signal-anchor for type II membrane protein segment. Residues 43 to 471 (GTSTSVSVIE…GSAIEAVSSP (429 aa)) are Lumenal-facing. Residue 72–82 (VIFDAGSSGSR) participates in ATP binding. The active-site Proton acceptor is the Glu-194. Residue 218-228 (GVVDLGGGSVQ) participates in ATP binding. N-linked (GlcNAc...) asparagine glycosylation is present at Asn-333.

This sequence belongs to the GDA1/CD39 NTPase family. The cofactor is Ca(2+). In terms of tissue distribution, expressed in roots, root hairs, root cap, leaves, stems, trichomes, phloem throughout the plant, guard cells, filaments of young stamens, stipules, papillae of stigmas, pollen, pollen tubes and the abscission zone of siliques.

The protein localises to the golgi apparatus membrane. It localises to the membrane. The catalysed reaction is a ribonucleoside 5'-triphosphate + 2 H2O = a ribonucleoside 5'-phosphate + 2 phosphate + 2 H(+). Catalyzes the hydrolysis of phosphoanhydride bonds of nucleoside tri- and di-phosphates. Substrate preference is ATP &gt; ADP. Functions with APY2 to reduce extracellular ATP level which is essential for pollen germination and normal plant development. Plays a role in the regulation of stomatal function by modulating extracellular ATP levels in guard cells. The chain is Apyrase 1 (APY1) from Arabidopsis thaliana (Mouse-ear cress).